A 566-amino-acid chain; its full sequence is Berberine bridge enzyme-like D-2 (566 aa).

An N-terminal signal peptide occupies residues 1-33 (MKRNISMSLQRLLIILMMISFLFTSLLVPSVSA). A disulfide bridge links cysteine 42 with cysteine 103. Asparagine 50 carries an N-linked (GlcNAc...) asparagine glycan. One can recognise an FAD-binding PCMH-type domain in the interval 81-257 (SKPKPTVIIV…YAWKIRLLKV (177 aa)). A Pros-8alpha-FAD histidine modification is found at histidine 118. Residues asparagine 364, asparagine 378, and asparagine 503 are each glycosylated (N-linked (GlcNAc...) asparagine).

Belongs to the oxygen-dependent FAD-linked oxidoreductase family. FAD serves as cofactor.

The protein resides in the vacuole. It participates in alkaloid biosynthesis; nicotine biosynthesis. In terms of biological role, involved in the biosynthesis of pyridine alkaloid natural products, leading mainly to the production of anabasine, anatabine, nicotine and nornicotine, effective deterrents against herbivores with antiparasitic and pesticide properties (neurotoxins); nornicotine serves as the precursor in the synthesis of the carcinogen compound N'-nitrosonornicotine (NNN). Catalyzes a late oxidation step subsequent to the pyridine ring condensation reaction in the biosynthesis of alkaloids. This is Berberine bridge enzyme-like D-2 from Nicotiana tabacum (Common tobacco).